The following is a 221-amino-acid chain: PKHD-type hydroxylase PMT9312_1262 (221 aa).

One can recognise a Fe2OG dioxygenase domain in the interval 80–174; sequence IIHGIMFTKS…RLVCVGWIES (95 aa). Fe cation-binding residues include histidine 98, aspartate 100, and histidine 155. Position 165 (arginine 165) interacts with 2-oxoglutarate.

The cofactor is Fe(2+). L-ascorbate is required as a cofactor.

This Prochlorococcus marinus (strain MIT 9312) protein is PKHD-type hydroxylase PMT9312_1262.